A 512-amino-acid polypeptide reads, in one-letter code: MKRKVKKMAAMATSIIMAIMIILHSIPVLAGRIIYDNETGTHGGYDYELWKDYGNTIMELNDGGTFSCQWSNIGNALFRKGRKFNSDKTYQELGDIVVEYGCDYNPNGNSYLCVYGWTRNPLVEYYIVESWGSWRPPGATPKGTITQWMAGTYEIYETTRVNQPSIDGTATFQQYWSVRTSKRTSGTISVTEHFKQWERMGMRMGKMYEVALTVEGYQSSGYANVYKNEIRIGANPTPAPSQSPIRRDAFSIIEAEEYNSTNSSTLQVIGTPNNGRGIGYIENGNTVTYSNIDFGSGATGFSATVATEVNTSIQIRSDSPTGTLLGTLYVSSTGSWNTYQTVSTNISKITGVHDIVLVFSGPVNVDNFIFSRSSPVPAPGDNTRDAYSIIQAEDYDSSYGPNLQIFSLPGGGSAIGYIENGYSTTYKNIDFGDGATSVTARVATQNATTIQVRLGSPSGTLLGTIYVGSTGSFDTYRDVSATISNTAGVKDIVLVFSGPVNVDWFVFSKSGT.

An N-terminal signal peptide occupies residues 1–30 (MKRKVKKMAAMATSIIMAIMIILHSIPVLA). Positions 33–228 (IIYDNETGTH…SSGYANVYKN (196 aa)) constitute a GH11 domain. The active-site Nucleophile is Glu124. The active-site Proton donor is the Glu215. 2 CBM6 domains span residues 251-371 (SIIE…FIFS) and 388-508 (SIIQ…FVFS). Residues Glu254 and Glu256 each contribute to the Ca(2+) site. Thr271 contributes to the D-xylotriose binding site. Arg276 contacts Ca(2+). The stretch at 279–340 (GYIENGNTVT…SSTGSWNTYQ (62 aa)) is repeat 1. The 2 X 61 AA approximate repeats stretch occupies residues 279-477 (GYIENGNTVT…GSTGSFDTYR (199 aa)). 3 residues coordinate D-xylotriose: Tyr280, Asn337, and Asn364. D-xylobiose is bound by residues Tyr280, Asn337, and Asn364. Residues Asp366, Gln391, Glu393, and Ser413 each coordinate Ca(2+). Repeat unit 2 spans residues 416-477 (GYIENGYSTT…GSTGSFDTYR (62 aa)). Positions 417, 474, and 501 each coordinate D-xylotriose. A Ca(2+)-binding site is contributed by Asp503.

The protein belongs to the glycosyl hydrolase 11 (cellulase G) family.

It catalyses the reaction Endohydrolysis of (1-&gt;4)-beta-D-xylosidic linkages in xylans.. It functions in the pathway glycan degradation; xylan degradation. This is Endo-1,4-beta-xylanase A (xynA) from Thermoclostridium stercorarium (Clostridium stercorarium).